Consider the following 339-residue polypeptide: Methylthioribose-1-phosphate isomerase (339 aa).

Residues 52–54, R89, and Q188 contribute to the substrate site; that span reads RGA. D229 functions as the Proton donor in the catalytic mechanism. 239 to 240 provides a ligand contact to substrate; it reads NK.

The protein belongs to the eIF-2B alpha/beta/delta subunits family. MtnA subfamily.

It catalyses the reaction 5-(methylsulfanyl)-alpha-D-ribose 1-phosphate = 5-(methylsulfanyl)-D-ribulose 1-phosphate. Its pathway is amino-acid biosynthesis; L-methionine biosynthesis via salvage pathway; L-methionine from S-methyl-5-thio-alpha-D-ribose 1-phosphate: step 1/6. Catalyzes the interconversion of methylthioribose-1-phosphate (MTR-1-P) into methylthioribulose-1-phosphate (MTRu-1-P). The sequence is that of Methylthioribose-1-phosphate isomerase from Anaeromyxobacter sp. (strain K).